We begin with the raw amino-acid sequence, 490 residues long: Limb region 1 protein homolog (490 aa).

The Extracellular portion of the chain corresponds to 1 to 19; it reads MEGQDEVSAREQHFHSQVR. A helical membrane pass occupies residues 20 to 40; that stretch reads ESTICFLLFAILYVVSYFIIT. Over 41 to 62 the chain is Cytoplasmic; sequence RYKRKSDEQEDEDAIVNRISLF. The helical transmembrane segment at 63 to 83 threads the bilayer; sequence LSTFTLAVSAGAVLLLPFSII. The Extracellular segment spans residues 84 to 110; the sequence is SNEILLSFPQNYYIQWLNGSLIHGLWN. A helical membrane pass occupies residues 111 to 131; the sequence is LASLFSNLCLFVLMPFAFFFL. Topologically, residues 132–151 are cytoplasmic; sequence ESEGFAGLKKGIRARILETL. A helical membrane pass occupies residues 152-172; it reads VMLLLLALLILGIVWVASALI. The Extracellular portion of the chain corresponds to 173 to 187; sequence DNDAASMESLYDLWE. Residues 188–208 traverse the membrane as a helical segment; it reads FYLPYLYSCISLMGCLLLLLC. Topologically, residues 209–291 are cytoplasmic; that stretch reads TPVGLSRMFT…RKKASAWERN (83 aa). Residues 250-287 are a coiled coil; sequence RLNGLSSSVEYNIMELEQELENVKTLKTKLERRKKASA. Residues 292–312 traverse the membrane as a helical segment; sequence LVYPAVMVLLLIETSISVLLV. The Extracellular portion of the chain corresponds to 313–339; sequence ACNILCLLVDETAMPKGTRGPGIGNAS. A helical membrane pass occupies residues 340–360; the sequence is LSTFGFVGAALEIILIFYLMV. Residues 361 to 383 are Cytoplasmic-facing; it reads SSVVGFYSLRFFGNFTPKKDDTT. The helical transmembrane segment at 384–404 threads the bilayer; the sequence is MTKIIGNCVSILVLSSALPVM. Residues 405–426 lie on the Extracellular side of the membrane; that stretch reads SRTLGITRFDLLGDFGRFNWLG. A helical transmembrane segment spans residues 427–447; that stretch reads NFYIVLSYNLLFAIVTTLCLV. Residues 448–490 lie on the Cytoplasmic side of the membrane; it reads RKFTSAVREELFKALGLHKLHLPNTSRDSETAKPSVNGHQKAL.

The protein belongs to the LIMR family. In terms of tissue distribution, widely expressed with strongest expression in heart and pancreas.

The protein localises to the membrane. Functionally, putative membrane receptor. This Homo sapiens (Human) protein is Limb region 1 protein homolog (LMBR1).